The chain runs to 159 residues: Ribosomal RNA large subunit methyltransferase H (159 aa).

S-adenosyl-L-methionine-binding positions include Leu76, Gly108, and 127 to 132 (FSKMTF).

The protein belongs to the RNA methyltransferase RlmH family. In terms of assembly, homodimer.

The protein localises to the cytoplasm. It carries out the reaction pseudouridine(1915) in 23S rRNA + S-adenosyl-L-methionine = N(3)-methylpseudouridine(1915) in 23S rRNA + S-adenosyl-L-homocysteine + H(+). Functionally, specifically methylates the pseudouridine at position 1915 (m3Psi1915) in 23S rRNA. This Shouchella clausii (strain KSM-K16) (Alkalihalobacillus clausii) protein is Ribosomal RNA large subunit methyltransferase H.